Consider the following 601-residue polypeptide: Putative purine permease C1399.01c (601 aa).

12 helical membrane-spanning segments follow: residues 64 to 84 (VPVL…VGGV), 102 to 122 (TNYL…IQIA), 131 to 151 (YYIG…VSVA), 179 to 199 (YGAF…MSFI), 207 to 227 (LFPP…LISS), 264 to 284 (GWGS…IIII), 294 to 314 (TTSV…TGYW), 337 to 357 (IYGP…MEAI), 424 to 444 (FFCA…AVFV), 450 to 470 (VLGG…IAII), 481 to 501 (FILT…DWFT), and 522 to 542 (LVME…NLIL).

It belongs to the nucleobase:cation symporter-2 (NCS2) (TC 2.A.40) family.

It is found in the vacuole membrane. This Schizosaccharomyces pombe (strain 972 / ATCC 24843) (Fission yeast) protein is Putative purine permease C1399.01c.